Reading from the N-terminus, the 178-residue chain is Inorganic pyrophosphatase (178 aa).

Positions 30, 44, and 56 each coordinate substrate. Mg(2+) contacts are provided by aspartate 66, aspartate 71, and aspartate 103. Tyrosine 142 contributes to the substrate binding site.

Belongs to the PPase family. In terms of assembly, homohexamer. It depends on Mg(2+) as a cofactor.

It localises to the cytoplasm. The catalysed reaction is diphosphate + H2O = 2 phosphate + H(+). In terms of biological role, catalyzes the hydrolysis of inorganic pyrophosphate (PPi) forming two phosphate ions. This is Inorganic pyrophosphatase from Xanthomonas campestris pv. campestris (strain ATCC 33913 / DSM 3586 / NCPPB 528 / LMG 568 / P 25).